Here is a 548-residue protein sequence, read N- to C-terminus: Tau-cadinol synthase (548 aa).

Mg(2+)-binding residues include Asp-303 and Asp-307. Substrate is bound by residues Asp-303, Asp-307, and Arg-443. The DDXXD motif motif lies at 303 to 307 (DDTYD).

It belongs to the terpene synthase family. As to quaternary structure, monomer. Mg(2+) serves as cofactor. It depends on Mn(2+) as a cofactor. Constitutively expressed in aerial tissues, but barely observed in roots.

It localises to the cytoplasm. It catalyses the reaction (2E,6E)-farnesyl diphosphate + H2O = tau-cadinol + diphosphate. The protein operates within secondary metabolite biosynthesis; terpenoid biosynthesis. In terms of biological role, sesquiterpene synthase that catalyzes the formation of a blend of sesquiterpenes and sesquiterpenoid alcohols. Converts farnesyl diphosphate to tau-cadinol. In Zea mays (Maize), this protein is Tau-cadinol synthase.